The primary structure comprises 337 residues: Phenylalanine--tRNA ligase alpha subunit (337 aa).

A Mg(2+)-binding site is contributed by Glu258.

It belongs to the class-II aminoacyl-tRNA synthetase family. Phe-tRNA synthetase alpha subunit type 1 subfamily. As to quaternary structure, tetramer of two alpha and two beta subunits. It depends on Mg(2+) as a cofactor.

The protein resides in the cytoplasm. The catalysed reaction is tRNA(Phe) + L-phenylalanine + ATP = L-phenylalanyl-tRNA(Phe) + AMP + diphosphate + H(+). This chain is Phenylalanine--tRNA ligase alpha subunit, found in Burkholderia vietnamiensis (strain G4 / LMG 22486) (Burkholderia cepacia (strain R1808)).